Reading from the N-terminus, the 203-residue chain is Guanylate kinase (203 aa).

A Guanylate kinase-like domain is found at 5-183 (GVLYILSAPS…AVEELKSVII (179 aa)). ATP is bound at residue 12–19 (APSGAGKT).

The protein belongs to the guanylate kinase family.

It localises to the cytoplasm. The catalysed reaction is GMP + ATP = GDP + ADP. In terms of biological role, essential for recycling GMP and indirectly, cGMP. The sequence is that of Guanylate kinase from Geobacter sulfurreducens (strain ATCC 51573 / DSM 12127 / PCA).